The chain runs to 436 residues: FAD-dependent monooxygenase pigN (436 aa).

Residues Glu-40, Gly-53, and Arg-118 each contribute to the FAD site. Arg-200 is a catalytic residue. Residues Asp-316 and Ala-329 each contribute to the FAD site.

The protein belongs to the paxM FAD-dependent monooxygenase family. The cofactor is FAD.

Its pathway is secondary metabolite biosynthesis. In terms of biological role, FAD-dependent monooxygenase; part of the gene cluster that mediates the biosynthesis of azaphilone pigments (MonAzPs), a complex mixture of compounds with a common azaphilone skeleton very widely used as food colorants. Within the pathway, pigN hydroxylates the benzaldehyde M7PKS-1 intermediate at C-4 to form the pyran ring. The first step of the pathway is performed by the nrPKS pigA that forms the hexaketide precursor from successive condensations of five malonyl-CoA units, with a simple acetyl-CoA starter unit. The role of esterase pigG is not clear, but it may play at most a supplementary role in the formation of the benzaldehyde produced by the pigA nrPKS. This very reactive benzaldehyde is intercepted by the pigC ketoreductase that to provide the first stable enzyme-free MonAzPs intermediate, 6-(4-hydroxy-2-oxopentyl)-3-methyl-2,4-dioxocyclohexane carbaldehyde, also known as M7PKS-1. The FAD-dependent monooxygenase pigN hydroxylates M7PKS-1 at C-4, which triggers the formation of the pyran ring. PigJ, pigK and pigD are involved in the acetylation of the pyran ring. PigJ and pigK form the two subunits of a dedicated fungal FAS that produces the side chain fatty acyl moiety of MonAzPs and pigD transfers the fatty acyl chain to the C-4 alcohol. PigM and pigO are involved in the elimination of the omega-1 alcohol. PigM acts as an O-acetyltransferase that synthesizes the putative O-11 acetyl intermediate whereas pigO eliminates acetic acid to yield an intermediate with a C10(11) double bond. The dehydration of the C-11 alcohol followed by the reduction of the C6(7) double bond by the NAD(P)H-dependent oxidoreductase pigE increases the electrophilicity of the C-5 ketone of the resulting acyl benzopyran. This in turn sets up the C-5 ketone for an intramolecular Knoevenagel aldol condensation with the C-20 enol of the side chain. This condensation affords the characteristic linear tricyclic carbon skeletons of the yellow pigments that serve as the common precursors for the classical yellow pigments monascin and ankaflavin, orange pigments rubopunctatin and monascorubrin, and red pigments ribropunctamine and monascorubramine. The FAD-dependent oxidoreductase pigF is especially invoved in the biosynthesis of orange and red pigments via desaturation of C6(7). This chain is FAD-dependent monooxygenase pigN, found in Monascus ruber (Mold).